The chain runs to 395 residues: Tryptophan synthase beta chain (395 aa).

Lys86 carries the post-translational modification N6-(pyridoxal phosphate)lysine.

It belongs to the TrpB family. In terms of assembly, tetramer of two alpha and two beta chains. Pyridoxal 5'-phosphate is required as a cofactor.

It carries out the reaction (1S,2R)-1-C-(indol-3-yl)glycerol 3-phosphate + L-serine = D-glyceraldehyde 3-phosphate + L-tryptophan + H2O. The protein operates within amino-acid biosynthesis; L-tryptophan biosynthesis; L-tryptophan from chorismate: step 5/5. In terms of biological role, the beta subunit is responsible for the synthesis of L-tryptophan from indole and L-serine. The polypeptide is Tryptophan synthase beta chain (Pseudoalteromonas atlantica (strain T6c / ATCC BAA-1087)).